The primary structure comprises 367 residues: Glutamate 5-kinase (367 aa).

K10 is a binding site for ATP. Substrate contacts are provided by S50, D137, and N149. ATP contacts are provided by residues 169 to 170 (TD) and 211 to 217 (TGGMGTK). Residues 275–353 (AGEITVDAGA…QQIDAILGYE (79 aa)) form the PUA domain.

It belongs to the glutamate 5-kinase family.

It is found in the cytoplasm. It carries out the reaction L-glutamate + ATP = L-glutamyl 5-phosphate + ADP. The protein operates within amino-acid biosynthesis; L-proline biosynthesis; L-glutamate 5-semialdehyde from L-glutamate: step 1/2. Functionally, catalyzes the transfer of a phosphate group to glutamate to form L-glutamate 5-phosphate. The sequence is that of Glutamate 5-kinase from Klebsiella pneumoniae subsp. pneumoniae (strain ATCC 700721 / MGH 78578).